Consider the following 376-residue polypeptide: Palmitoyl-[acyl-carrier-protein] 4-desaturase 2, chloroplastic (376 aa).

Residues 1–33 (MELHLALRASPLPAADPGRRPPPPRGNFATNCT) constitute a chloroplast transit peptide. Glu114, Glu149, His152, Glu202, Glu235, and His238 together coordinate Fe cation.

Belongs to the fatty acid desaturase type 2 family. Homodimer. Requires Fe(2+) as cofactor. As to expression, preferentially expressed in the flower labellum.

Its subcellular location is the plastid. It localises to the chloroplast stroma. It carries out the reaction hexadecanoyl-[ACP] + 2 reduced [2Fe-2S]-[ferredoxin] + O2 + 2 H(+) = (4Z)-hexadecenoyl-[ACP] + 2 oxidized [2Fe-2S]-[ferredoxin] + 2 H2O. The catalysed reaction is octadecanoyl-[ACP] + 2 reduced [2Fe-2S]-[ferredoxin] + O2 + 2 H(+) = (9Z)-octadecenoyl-[ACP] + 2 oxidized [2Fe-2S]-[ferredoxin] + 2 H2O. Its pathway is lipid metabolism; fatty acid metabolism. Functionally, converts stearoyl-ACP to oleoyl-ACP by introduction of a cis double bond between carbons 9 and 10 of the acyl chain. Converts palmitoyl-ACP to (4Z)-hexadec-4-enoyl-ACP by introduction of a cis double bond between carbons 4 and 5 of the acyl chain. Catalyzes the desaturation of saturated fatty acid 18:0 and 16:0 to generate 18:1 (delta-9) and 16:1 (delta-4) intermediates, expected to give rise to 9-alkenes and 12-alkenes, respectively. The chain is Palmitoyl-[acyl-carrier-protein] 4-desaturase 2, chloroplastic (SAD2) from Ophrys arachnitiformis subsp. archipelagi (Orchid).